A 250-amino-acid chain; its full sequence is 3-deoxy-manno-octulosonate cytidylyltransferase (250 aa).

Belongs to the KdsB family.

The protein localises to the cytoplasm. The catalysed reaction is 3-deoxy-alpha-D-manno-oct-2-ulosonate + CTP = CMP-3-deoxy-beta-D-manno-octulosonate + diphosphate. It participates in nucleotide-sugar biosynthesis; CMP-3-deoxy-D-manno-octulosonate biosynthesis; CMP-3-deoxy-D-manno-octulosonate from 3-deoxy-D-manno-octulosonate and CTP: step 1/1. Its pathway is bacterial outer membrane biogenesis; lipopolysaccharide biosynthesis. Activates KDO (a required 8-carbon sugar) for incorporation into bacterial lipopolysaccharide in Gram-negative bacteria. This chain is 3-deoxy-manno-octulosonate cytidylyltransferase, found in Syntrophotalea carbinolica (strain DSM 2380 / NBRC 103641 / GraBd1) (Pelobacter carbinolicus).